The primary structure comprises 104 residues: Class I hydrophobin 12 (104 aa).

The first 25 residues, methionine 1–serine 25, serve as a signal peptide directing secretion. 4 disulfides stabilise this stretch: cysteine 27/cysteine 85, cysteine 34/cysteine 79, cysteine 35/cysteine 67, and cysteine 86/cysteine 99.

The protein belongs to the fungal hydrophobin family. Self-assembles to form functional amyloid fibrils called rodlets. Self-assembly into fibrillar rodlets occurs spontaneously at hydrophobic:hydrophilic interfaces and the rodlets further associate laterally to form amphipathic monolayers.

It is found in the secreted. It localises to the cell wall. Functionally, aerial growth, conidiation, and dispersal of filamentous fungi in the environment rely upon a capability of their secreting small amphipathic proteins called hydrophobins (HPBs) with low sequence identity. Class I can self-assemble into an outermost layer of rodlet bundles on aerial cell surfaces, conferring cellular hydrophobicity that supports fungal growth, development and dispersal; whereas Class II form highly ordered films at water-air interfaces through intermolecular interactions but contribute nothing to the rodlet structure. Hydph12 is a class I hydrophobin involved in the formation of mycelium knots. This chain is Class I hydrophobin 12, found in Pleurotus ostreatus (strain PC15) (Oyster mushroom).